The primary structure comprises 330 residues: Formylaminopyrimidine-binding protein (330 aa).

A signal peptide spans 1-18 (MKSFKIISLLLAILFLAS). The N-palmitoyl cysteine moiety is linked to residue C19. The S-diacylglycerol cysteine moiety is linked to residue C19. Residues 38-39 (DW), Y90, N145, Y188, and E192 contribute to the substrate site.

The protein belongs to the NMT1 family. In terms of assembly, the complex is likely composed of an ATP-binding protein (ThiZ), a transmembrane protein (ThiX) and a solute-binding protein (ThiY).

It localises to the cell membrane. The protein operates within cofactor biosynthesis; thiamine diphosphate biosynthesis. In terms of biological role, participates in a thiamine pyrimidine salvage pathway as part of the ABC transporter complex ThiXYZ involved in the import of thiamine degradation products. Binds the formylaminopyrimidine N-formyl-4-amino-5-aminomethyl-2-methylpyrimidine (FAMP). Does not bind thiamine. The chain is Formylaminopyrimidine-binding protein from Halalkalibacterium halodurans (strain ATCC BAA-125 / DSM 18197 / FERM 7344 / JCM 9153 / C-125) (Bacillus halodurans).